Consider the following 181-residue polypeptide: UPF0398 protein lmo1889 (181 aa).

The protein belongs to the UPF0398 family.

In Listeria monocytogenes serovar 1/2a (strain ATCC BAA-679 / EGD-e), this protein is UPF0398 protein lmo1889.